The following is a 523-amino-acid chain: Excitatory amino acid transporter 3 (523 aa).

Residues M1 to H18 lie on the Cytoplasmic side of the membrane. A helical transmembrane segment spans residues W19–V38. Topologically, residues R39–R61 are extracellular. A helical membrane pass occupies residues M62 to L82. Topologically, residues D83–R93 are cytoplasmic. Residues A94–V114 traverse the membrane as a helical segment. 3 residues coordinate Na(+): Y98, T101, and T102. The Extracellular segment spans residues S115 to L204. N-linked (GlcNAc...) asparagine glycans are attached at residues N128, N178, and N194. The chain crosses the membrane as a helical span at residues Y205–M228. Topologically, residues G229–D237 are cytoplasmic. A helical transmembrane segment spans residues F238 to I265. At A266–M285 the chain is on the extracellular side. A helical membrane pass occupies residues A286–V307. Residues V308–P312 lie on the Cytoplasmic side of the membrane. An intramembrane region (discontinuously helical) is located at residues F313–A343. L-aspartate contacts are provided by S330 and S332. Residues E344 to R352 are Cytoplasmic-facing. Residues I353–F379 form a helical membrane-spanning segment. The Na(+) site is built by G361, T363, N365, and D367. T369 is a binding site for L-aspartate. Topologically, residues I380 to Q392 are extracellular. Positions I393–G426 form an intramembrane region, discontinuously helical. Na(+) contacts are provided by S404, I405, and A407. Position 410 (V410) interacts with L-aspartate. At L427–D439 the chain is on the extracellular side. Residues W440 to V461 form a helical membrane-spanning segment. Residues R446, T447, and N450 each coordinate L-aspartate. Positions 450 and 454 each coordinate Na(+). Residues E462–F523 lie on the Cytoplasmic side of the membrane. Phosphoserine occurs at positions 516 and 521.

Belongs to the dicarboxylate/amino acid:cation symporter (DAACS) (TC 2.A.23) family. SLC1A1 subfamily. Homotrimer. Interacts with ARL6IP5. Interacts with RTN2 (via N-terminus); the interaction promotes cell surface expression of SLC1A1. Interacts with SORCS2; this interaction is important for normal expression at the cell membrane. Detected on neurons in the brain cortex, dentate gyrus and hippocampus CA2 region (at protein level). Expressed in whole brain, brain cortex, hippocampus, cerebellum, lung, kidney, small intestine and skeletal muscle. Expressed in the renal outer medulla, medullary ray and cortex (at protein level).

The protein resides in the cell membrane. The protein localises to the apical cell membrane. Its subcellular location is the synapse. It is found in the synaptosome. It localises to the early endosome membrane. The protein resides in the late endosome membrane. The protein localises to the recycling endosome membrane. The catalysed reaction is K(+)(in) + L-glutamate(out) + 3 Na(+)(out) + H(+)(out) = K(+)(out) + L-glutamate(in) + 3 Na(+)(in) + H(+)(in). It carries out the reaction K(+)(in) + L-aspartate(out) + 3 Na(+)(out) + H(+)(out) = K(+)(out) + L-aspartate(in) + 3 Na(+)(in) + H(+)(in). The enzyme catalyses D-aspartate(out) + K(+)(in) + 3 Na(+)(out) + H(+)(out) = D-aspartate(in) + K(+)(out) + 3 Na(+)(in) + H(+)(in). It catalyses the reaction K(+)(in) + L-cysteine(out) + 3 Na(+)(out) + H(+)(out) = K(+)(out) + L-cysteine(in) + 3 Na(+)(in) + H(+)(in). Functionally, sodium-dependent, high-affinity amino acid transporter that mediates the uptake of L-glutamate and also L-aspartate and D-aspartate. Can also transport L-cysteine. Functions as a symporter that transports one amino acid molecule together with two or three Na(+) ions and one proton, in parallel with the counter-transport of one K(+) ion. Mediates Cl(-) flux that is not coupled to amino acid transport; this avoids the accumulation of negative charges due to aspartate and Na(+) symport. Plays an important role in L-glutamate and L-aspartate reabsorption in renal tubuli. Plays a redundant role in the rapid removal of released glutamate from the synaptic cleft, which is essential for terminating the postsynaptic action of glutamate. Contributes to glutathione biosynthesis and protection against oxidative stress via its role in L-glutamate and L-cysteine transport. Negatively regulated by ARL6IP5. This Mus musculus (Mouse) protein is Excitatory amino acid transporter 3 (Slc1a1).